Here is a 245-residue protein sequence, read N- to C-terminus: tRNA (guanine-N(1)-)-methyltransferase (245 aa).

S-adenosyl-L-methionine-binding positions include Gly112 and 132 to 137; that span reads IGDFVL.

Belongs to the RNA methyltransferase TrmD family. In terms of assembly, homodimer.

The protein resides in the cytoplasm. The enzyme catalyses guanosine(37) in tRNA + S-adenosyl-L-methionine = N(1)-methylguanosine(37) in tRNA + S-adenosyl-L-homocysteine + H(+). Functionally, specifically methylates guanosine-37 in various tRNAs. The chain is tRNA (guanine-N(1)-)-methyltransferase from Geobacter sulfurreducens (strain ATCC 51573 / DSM 12127 / PCA).